A 388-amino-acid polypeptide reads, in one-letter code: Zinc finger CCCH domain-containing protein 47 (388 aa).

Disordered stretches follow at residues 1-130 and 144-282; these read MADP…MAPL and PLHE…TPSA. Basic and acidic residues-rich tracts occupy residues 61 to 109 and 181 to 193; these read AAND…KSEV and PDNHDHDPRHLPR. Positions 260–274 are enriched in low complexity; it reads ASSSSSSSSAGQQGS. 2 C3H1-type zinc fingers span residues 321–348 and 359–388; these read HHKIALCSKWRKGRCHNGAACRYSHGEE and GGGGRPCPELAAAKGWCRYGLNCKYCHGGV.

This Oryza sativa subsp. japonica (Rice) protein is Zinc finger CCCH domain-containing protein 47.